The sequence spans 297 residues: UDP-N-acetylenolpyruvoylglucosamine reductase (297 aa).

The 166-residue stretch at 27-192 (IGGPADALLE…LRAAYRLHPG (166 aa)) folds into the FAD-binding PCMH-type domain. The active site involves Arg-170. Ser-220 functions as the Proton donor in the catalytic mechanism. Glu-290 is a catalytic residue.

Belongs to the MurB family. FAD is required as a cofactor.

It localises to the cytoplasm. The enzyme catalyses UDP-N-acetyl-alpha-D-muramate + NADP(+) = UDP-N-acetyl-3-O-(1-carboxyvinyl)-alpha-D-glucosamine + NADPH + H(+). Its pathway is cell wall biogenesis; peptidoglycan biosynthesis. Cell wall formation. The chain is UDP-N-acetylenolpyruvoylglucosamine reductase from Rubrobacter xylanophilus (strain DSM 9941 / JCM 11954 / NBRC 16129 / PRD-1).